The following is a 279-amino-acid chain: Dermonecrotic toxin LrSicTox-alphaIA1i (279 aa).

His11 is a catalytic residue. Positions 31 and 33 each coordinate Mg(2+). His47 functions as the Nucleophile in the catalytic mechanism. Cystine bridges form between Cys51–Cys57 and Cys53–Cys196. Asp91 contacts Mg(2+). A glycan (N-linked (GlcNAc...) asparagine) is linked at Asn256.

Belongs to the arthropod phospholipase D family. Class II subfamily. The cofactor is Mg(2+). In terms of tissue distribution, expressed by the venom gland.

It is found in the secreted. The catalysed reaction is an N-(acyl)-sphingosylphosphocholine = an N-(acyl)-sphingosyl-1,3-cyclic phosphate + choline. It catalyses the reaction an N-(acyl)-sphingosylphosphoethanolamine = an N-(acyl)-sphingosyl-1,3-cyclic phosphate + ethanolamine. The enzyme catalyses a 1-acyl-sn-glycero-3-phosphocholine = a 1-acyl-sn-glycero-2,3-cyclic phosphate + choline. It carries out the reaction a 1-acyl-sn-glycero-3-phosphoethanolamine = a 1-acyl-sn-glycero-2,3-cyclic phosphate + ethanolamine. With respect to regulation, inhibited with low affinity by edelfosine. Functionally, dermonecrotic toxins cleave the phosphodiester linkage between the phosphate and headgroup of certain phospholipids (sphingolipid and lysolipid substrates), forming an alcohol (often choline) and a cyclic phosphate. This toxin acts on sphingomyelin (SM). It also acts on a broad range of lysophospholipids, like lysophosphatidylinositol (LPI), lysophosphatidylglycerol (LPG), lysophosphatidylethanolamine (LPE), lysobisphosphatidic acid (LBPA), lysophosphatidylserine (LPS) and lysophosphatidylcholines (LPC) of varying chain lengths. The substrate preference is LPI &gt; LPG &gt; LPS &gt; LPC &gt;&gt; LPE, LBPA. Furthermore, the enzyme also act on cyclic phosphatidic acid and lyso-platelet activating factor (LPAF, an alkyl-LPC). The enzyme does not act on sphingosylphosphorylcholine (SPC, also known as lyso-sphingomyelin) and PAF. The toxin may also act on ceramide phosphoethanolamine (CPE). It acts by transphosphatidylation, releasing exclusively cyclic phosphate products as second products. It does not exhibit detectable PLA1/2 activity. It induces dose-dependent hemolysis and dermonecrosis. Also induces increased vascular permeability, edema, inflammatory response, and platelet aggregation. The polypeptide is Dermonecrotic toxin LrSicTox-alphaIA1i (Loxosceles reclusa (Brown recluse spider)).